Reading from the N-terminus, the 95-residue chain is Signal recognition particle 19 kDa protein (95 aa).

Belongs to the SRP19 family. As to quaternary structure, part of the signal recognition particle protein translocation system, which is composed of SRP and FtsY. Archaeal SRP consists of a 7S RNA molecule of 300 nucleotides and two protein subunits: SRP54 and SRP19.

It localises to the cytoplasm. Involved in targeting and insertion of nascent membrane proteins into the cytoplasmic membrane. Binds directly to 7S RNA and mediates binding of the 54 kDa subunit of the SRP. This Staphylothermus marinus (strain ATCC 43588 / DSM 3639 / JCM 9404 / F1) protein is Signal recognition particle 19 kDa protein.